Reading from the N-terminus, the 503-residue chain is MEESQGYLELYKSGQHDFLYPLIFQEYIYVLAHDHGLNRSILLENLGSDNKFSSLIVKRLITRMYQQNRLIISANDSNQNPFLGHNKDLYSQIISEGFAVIVEIPFPLRLVSSLERKEIVKSHNLRSIHSVFPFLEDKFLHLNYVSDILIPHPIHLEILVQTLRYWVKDASSLHLLRFFLYEYRNWNSLINPKKSIFVFSKRNQRLFLFLYNSHVYEYESVFVFLRNQSSHLRSTSSGALLERIYFYGKIKHLVEVFANDFQAILWLFKDTFVHYVRYQGKSILASKGTPLLMNKWKYYLVNFWQCNFYVWSQPVRIYINQLSNHSLYFLGYISSVGLNPSVVRNQMLENSFIIDNAIKKFDIIVPIIPLIGSLAKAKFCNVLGHPISKPARADSSDSDIIDRFVRICRNLSHYHSGSSKKKSLYRIKYILRLSCARTLARKHKSPVRAFLKRLGSELLEEFLTEEEQVLSLIVPASSTSRRLYRGRIWYLDIICINDLANHE.

It belongs to the intron maturase 2 family. MatK subfamily.

It localises to the plastid. Its subcellular location is the chloroplast. Usually encoded in the trnK tRNA gene intron. Probably assists in splicing its own and other chloroplast group II introns. The polypeptide is Maturase K (Liquidambar orientalis (Oriental sweet gum)).